The sequence spans 264 residues: Thymidylate synthase (264 aa).

Arginine 21 is a dUMP binding site. Histidine 51 is a (6R)-5,10-methylene-5,6,7,8-tetrahydrofolate binding site. Position 126-127 (126-127) interacts with dUMP; the sequence is RR. The active-site Nucleophile is cysteine 146. DUMP is bound by residues 166-169, asparagine 177, and 207-209; these read RSAD and HLY. Aspartate 169 is a (6R)-5,10-methylene-5,6,7,8-tetrahydrofolate binding site. Residue alanine 263 participates in (6R)-5,10-methylene-5,6,7,8-tetrahydrofolate binding.

It belongs to the thymidylate synthase family. Bacterial-type ThyA subfamily. Homodimer.

It localises to the cytoplasm. It carries out the reaction dUMP + (6R)-5,10-methylene-5,6,7,8-tetrahydrofolate = 7,8-dihydrofolate + dTMP. The protein operates within pyrimidine metabolism; dTTP biosynthesis. Its function is as follows. Catalyzes the reductive methylation of 2'-deoxyuridine-5'-monophosphate (dUMP) to 2'-deoxythymidine-5'-monophosphate (dTMP) while utilizing 5,10-methylenetetrahydrofolate (mTHF) as the methyl donor and reductant in the reaction, yielding dihydrofolate (DHF) as a by-product. This enzymatic reaction provides an intracellular de novo source of dTMP, an essential precursor for DNA biosynthesis. This is Thymidylate synthase from Paramagnetospirillum magneticum (strain ATCC 700264 / AMB-1) (Magnetospirillum magneticum).